The sequence spans 526 residues: Peptide chain release factor 3 (526 aa).

The 269-residue stretch at 9–277 (DKRRTFAIIS…GIVEWAPKPL (269 aa)) folds into the tr-type G domain. Residues 18–25 (SHPDAGKT), 86–90 (DTPGH), and 140–143 (NKLD) contribute to the GTP site.

The protein belongs to the TRAFAC class translation factor GTPase superfamily. Classic translation factor GTPase family. PrfC subfamily.

The protein localises to the cytoplasm. Increases the formation of ribosomal termination complexes and stimulates activities of RF-1 and RF-2. It binds guanine nucleotides and has strong preference for UGA stop codons. It may interact directly with the ribosome. The stimulation of RF-1 and RF-2 is significantly reduced by GTP and GDP, but not by GMP. This Shewanella baltica (strain OS223) protein is Peptide chain release factor 3.